The following is an 81-amino-acid chain: Cytochrome b559 subunit alpha (81 aa).

Residues 21 to 35 (VIHALTIPALFLAGW) form a helical membrane-spanning segment. H23 is a heme binding site.

It belongs to the PsbE/PsbF family. Heterodimer of an alpha subunit and a beta subunit. PSII is composed of 1 copy each of membrane proteins PsbA, PsbB, PsbC, PsbD, PsbE, PsbF, PsbH, PsbI, PsbJ, PsbK, PsbL, PsbM, PsbT, PsbX, PsbY, PsbZ, Psb30/Ycf12, peripheral proteins PsbO, CyanoQ (PsbQ), PsbU, PsbV and a large number of cofactors. It forms dimeric complexes. The cofactor is heme b.

Its subcellular location is the cellular thylakoid membrane. Its function is as follows. This b-type cytochrome is tightly associated with the reaction center of photosystem II (PSII). PSII is a light-driven water:plastoquinone oxidoreductase that uses light energy to abstract electrons from H(2)O, generating O(2) and a proton gradient subsequently used for ATP formation. It consists of a core antenna complex that captures photons, and an electron transfer chain that converts photonic excitation into a charge separation. This is Cytochrome b559 subunit alpha from Synechococcus sp. (strain JA-2-3B'a(2-13)) (Cyanobacteria bacterium Yellowstone B-Prime).